A 72-amino-acid chain; its full sequence is DNA-directed RNA polymerase subunit omega (72 aa).

The protein belongs to the RNA polymerase subunit omega family. In terms of assembly, the RNAP catalytic core consists of 2 alpha, 1 beta, 1 beta' and 1 omega subunit. When a sigma factor is associated with the core the holoenzyme is formed, which can initiate transcription.

The catalysed reaction is RNA(n) + a ribonucleoside 5'-triphosphate = RNA(n+1) + diphosphate. Promotes RNA polymerase assembly. Latches the N- and C-terminal regions of the beta' subunit thereby facilitating its interaction with the beta and alpha subunits. The chain is DNA-directed RNA polymerase subunit omega from Francisella tularensis subsp. holarctica (strain LVS).